We begin with the raw amino-acid sequence, 224 residues long: 7-cyano-7-deazaguanine synthase (224 aa).

10-20 (LSGGLDSATVV) is an ATP binding site. Residues Cys189, Cys199, Cys202, and Cys205 each contribute to the Zn(2+) site.

This sequence belongs to the QueC family. Zn(2+) is required as a cofactor.

The enzyme catalyses 7-carboxy-7-deazaguanine + NH4(+) + ATP = 7-cyano-7-deazaguanine + ADP + phosphate + H2O + H(+). It functions in the pathway purine metabolism; 7-cyano-7-deazaguanine biosynthesis. Functionally, catalyzes the ATP-dependent conversion of 7-carboxy-7-deazaguanine (CDG) to 7-cyano-7-deazaguanine (preQ(0)). The chain is 7-cyano-7-deazaguanine synthase from Ectopseudomonas mendocina (strain ymp) (Pseudomonas mendocina).